The following is a 296-amino-acid chain: Giardin subunit alpha-4 (296 aa).

Annexin repeat units follow at residues 3 to 72 (ATVS…VHAW), 74 to 146 (SRFE…GWVK), 153 to 223 (KSIK…AHHW), and 226 to 294 (DPGQ…VFWR).

This sequence belongs to the annexin family. Giardin subunit alpha subfamily.

It localises to the cytoplasm. Its subcellular location is the cytoskeleton. Functionally, giardins are involved in parasite attachment to the intestinal mucosa and in the cytoskeletal disassembly and reassembly that marks the transition from infectious trophozoite to transmissible cyst. They may interact with other cytoskeletal proteins such as microtubules in the microribbons or crossbridges, to maintain the integrity of the ventral disk. The sequence is that of Giardin subunit alpha-4 from Giardia intestinalis (Giardia lamblia).